The chain runs to 284 residues: MSSAQLLTAQQLAARLSEPDLLVLDCRFALEDPSYGARVYQENHIPGAHFADLERDLSAPVRKGVTGRHPLPDPAELALKLQAWGLRQDSQVVLYDDGPGAFAARAWWLLHWLGKRDGVYLLDGGLAAWKAAGLALTNGESSLRPGDFQGQPDASLLIDAATLQAQLGQPGLALLDARAQPRFRGEVEPIDPVAGHIPGAQCAAFTDNLGSDGRFLPPEQLHQRFSALLRGRPVDELVAYCGSGVTACHNLFALSLAGFPLPRLYAGSWSEWITDPRRPVATGD.

2 Rhodanese domains span residues 17 to 138 (SEPD…ALTN) and 168 to 281 (GQPG…RPVA). R182 contacts substrate. Catalysis depends on C241, which acts as the Cysteine persulfide intermediate. The tract at residues 241 to 247 (CGSGVTA) is substrate specificity.

It localises to the cytoplasm. It catalyses the reaction 2-oxo-3-sulfanylpropanoate + [thioredoxin]-dithiol = [thioredoxin]-disulfide + hydrogen sulfide + pyruvate + H(+). Catalyzes the transfer of sulfur from 3-mercaptopyruvate to a thiol-containing acceptor to form an intramolecular disulfide releasing hydrogen sulfide and pyruvate. The protein is Probable 3-mercaptopyruvate sulfurtransferase (sseA) of Pseudomonas aeruginosa (strain ATCC 15692 / DSM 22644 / CIP 104116 / JCM 14847 / LMG 12228 / 1C / PRS 101 / PAO1).